The primary structure comprises 430 residues: 3-phosphoshikimate 1-carboxyvinyltransferase (430 aa).

Residues lysine 21, serine 22, and arginine 26 each contribute to the 3-phosphoshikimate site. Lysine 21 is a phosphoenolpyruvate binding site. Phosphoenolpyruvate contacts are provided by glycine 95 and arginine 123. Threonine 167, glutamine 169, aspartate 315, and lysine 342 together coordinate 3-phosphoshikimate. Glutamine 169 is a phosphoenolpyruvate binding site. Aspartate 315 acts as the Proton acceptor in catalysis. The phosphoenolpyruvate site is built by arginine 346 and arginine 390.

The protein belongs to the EPSP synthase family. Monomer.

Its subcellular location is the cytoplasm. It catalyses the reaction 3-phosphoshikimate + phosphoenolpyruvate = 5-O-(1-carboxyvinyl)-3-phosphoshikimate + phosphate. It participates in metabolic intermediate biosynthesis; chorismate biosynthesis; chorismate from D-erythrose 4-phosphate and phosphoenolpyruvate: step 6/7. In terms of biological role, catalyzes the transfer of the enolpyruvyl moiety of phosphoenolpyruvate (PEP) to the 5-hydroxyl of shikimate-3-phosphate (S3P) to produce enolpyruvyl shikimate-3-phosphate and inorganic phosphate. This chain is 3-phosphoshikimate 1-carboxyvinyltransferase, found in Endomicrobium trichonymphae.